A 357-amino-acid chain; its full sequence is NADH-quinone oxidoreductase subunit H (357 aa).

8 helical membrane passes run 18-38, 92-112, 127-147, 165-185, 206-226, 268-288, 294-314, and 329-349; these read VAWMVVWSLVKIVVIAVPIIL, VLFVVAPVVTLMPALAAWAVV, LLYIMAITSIGVYGVIVAGWA, VSYELAIGFVLVSVLLVSGSL, FLSWNWLPLLPLFIIYVISAV, ILLSCMAAIMFLGGWMSPIDI, IPGWIWLGIKTFCVVSMFVWF, and LGWKIFIPLTGVWLVVLAIWM.

The protein belongs to the complex I subunit 1 family. In terms of assembly, NDH-1 is composed of 14 different subunits. Subunits NuoA, H, J, K, L, M, N constitute the membrane sector of the complex.

The protein resides in the cell inner membrane. It carries out the reaction a quinone + NADH + 5 H(+)(in) = a quinol + NAD(+) + 4 H(+)(out). Functionally, NDH-1 shuttles electrons from NADH, via FMN and iron-sulfur (Fe-S) centers, to quinones in the respiratory chain. The immediate electron acceptor for the enzyme in this species is believed to be ubiquinone. Couples the redox reaction to proton translocation (for every two electrons transferred, four hydrogen ions are translocated across the cytoplasmic membrane), and thus conserves the redox energy in a proton gradient. This subunit may bind ubiquinone. This chain is NADH-quinone oxidoreductase subunit H, found in Bordetella bronchiseptica (strain ATCC BAA-588 / NCTC 13252 / RB50) (Alcaligenes bronchisepticus).